Reading from the N-terminus, the 216-residue chain is Adenylate kinase (216 aa).

ATP is bound at residue 10 to 15; sequence GAGKGT. An NMP region spans residues 30–59; sequence STGDIFRYNIKQGTELGKKAKSYMDQGLLV. Residues Thr31, Arg36, 57–59, 85–88, and Gln92 contribute to the AMP site; these read LLV and GFPR. The tract at residues 126–163 is LID; sequence GRRICRECGATFHVQYNPSTKGALCDQCGGELYQRDDD. Arg127 serves as a coordination point for ATP. Positions 130 and 133 each coordinate Zn(2+). ATP is bound at residue 136-137; the sequence is TF. Residues Cys150 and Cys153 each contribute to the Zn(2+) site. The AMP site is built by Arg160 and Arg171. Lys199 serves as a coordination point for ATP.

This sequence belongs to the adenylate kinase family. In terms of assembly, monomer.

Its subcellular location is the cytoplasm. The enzyme catalyses AMP + ATP = 2 ADP. The protein operates within purine metabolism; AMP biosynthesis via salvage pathway; AMP from ADP: step 1/1. In terms of biological role, catalyzes the reversible transfer of the terminal phosphate group between ATP and AMP. Plays an important role in cellular energy homeostasis and in adenine nucleotide metabolism. This Alkaliphilus oremlandii (strain OhILAs) (Clostridium oremlandii (strain OhILAs)) protein is Adenylate kinase.